We begin with the raw amino-acid sequence, 419 residues long: UDP-N-acetylglucosamine 1-carboxyvinyltransferase (419 aa).

Lys-22–Asn-23 is a binding site for phosphoenolpyruvate. UDP-N-acetyl-alpha-D-glucosamine is bound at residue Arg-91. Cys-115 acts as the Proton donor in catalysis. Cys-115 is subject to 2-(S-cysteinyl)pyruvic acid O-phosphothioketal. Residues Arg-120–Leu-124, Lys-160–Val-163, Asp-305, and Val-327 contribute to the UDP-N-acetyl-alpha-D-glucosamine site.

It belongs to the EPSP synthase family. MurA subfamily.

Its subcellular location is the cytoplasm. The enzyme catalyses phosphoenolpyruvate + UDP-N-acetyl-alpha-D-glucosamine = UDP-N-acetyl-3-O-(1-carboxyvinyl)-alpha-D-glucosamine + phosphate. The protein operates within cell wall biogenesis; peptidoglycan biosynthesis. Its function is as follows. Cell wall formation. Adds enolpyruvyl to UDP-N-acetylglucosamine. This is UDP-N-acetylglucosamine 1-carboxyvinyltransferase from Shigella sonnei (strain Ss046).